The sequence spans 97 residues: Large ribosomal subunit protein uL23 (97 aa).

The protein belongs to the universal ribosomal protein uL23 family. In terms of assembly, part of the 50S ribosomal subunit. Contacts protein L29, and trigger factor when it is bound to the ribosome.

In terms of biological role, one of the early assembly proteins it binds 23S rRNA. One of the proteins that surrounds the polypeptide exit tunnel on the outside of the ribosome. Forms the main docking site for trigger factor binding to the ribosome. This chain is Large ribosomal subunit protein uL23, found in Rhizobium etli (strain CIAT 652).